Consider the following 273-residue polypeptide: Shikimate dehydrogenase (NADP(+)) (273 aa).

Shikimate is bound by residues 14–16 (SKS) and Thr61. The active-site Proton acceptor is the Lys65. Residue Glu77 participates in NADP(+) binding. The shikimate site is built by Asn86 and Asp102. Residues 126–130 (GAGGA), 150–155 (NRTLSK), and Met214 each bind NADP(+). Tyr216 lines the shikimate pocket. Residue Gly238 coordinates NADP(+).

The protein belongs to the shikimate dehydrogenase family. As to quaternary structure, homodimer.

It carries out the reaction shikimate + NADP(+) = 3-dehydroshikimate + NADPH + H(+). The protein operates within metabolic intermediate biosynthesis; chorismate biosynthesis; chorismate from D-erythrose 4-phosphate and phosphoenolpyruvate: step 4/7. Its function is as follows. Involved in the biosynthesis of the chorismate, which leads to the biosynthesis of aromatic amino acids. Catalyzes the reversible NADPH linked reduction of 3-dehydroshikimate (DHSA) to yield shikimate (SA). In Photobacterium profundum (strain SS9), this protein is Shikimate dehydrogenase (NADP(+)).